Consider the following 271-residue polypeptide: Putative pyruvate, phosphate dikinase regulatory protein 2 (271 aa).

An ADP-binding site is contributed by 151–158 (GVSRTSKT).

This sequence belongs to the pyruvate, phosphate/water dikinase regulatory protein family. PDRP subfamily.

It catalyses the reaction N(tele)-phospho-L-histidyl/L-threonyl-[pyruvate, phosphate dikinase] + ADP = N(tele)-phospho-L-histidyl/O-phospho-L-threonyl-[pyruvate, phosphate dikinase] + AMP + H(+). The enzyme catalyses N(tele)-phospho-L-histidyl/O-phospho-L-threonyl-[pyruvate, phosphate dikinase] + phosphate + H(+) = N(tele)-phospho-L-histidyl/L-threonyl-[pyruvate, phosphate dikinase] + diphosphate. Functionally, bifunctional serine/threonine kinase and phosphorylase involved in the regulation of the pyruvate, phosphate dikinase (PPDK) by catalyzing its phosphorylation/dephosphorylation. This chain is Putative pyruvate, phosphate dikinase regulatory protein 2, found in Staphylococcus haemolyticus (strain JCSC1435).